The sequence spans 326 residues: MTKYAKIIGTGSYLPPRRVTNHDLATQLAEKGIETSDDWIVSRSGISARHWAEPDVTSSDLAVKAAEQAIEAAGIDRQSIDLIIVATSTPDFVFPSTACIVQEKLGITNHCPAFDLQAVCSGFVYALATADKFIRSGSHRNVLVIGTEVFSRILDFNDRTTCVLFGDGAGAVLLSASEEPGILSTAMHSDGRHVDILCVPGNVAGGNITGNPFLHMDGQAVFKLAVNVLDKVAREAMEAASVTPGQIDWLIPHQANIRIMQGTAKKLGLPAERMVATVHEHGNTSAASIPLALDVAVRDGRIRAGQTVLMEGVGGGFTWGAVLLRM.

Catalysis depends on residues C120 and H253. The tract at residues 254–258 (QANIR) is ACP-binding. Residue N283 is part of the active site.

Belongs to the thiolase-like superfamily. FabH family. In terms of assembly, homodimer.

The protein resides in the cytoplasm. The catalysed reaction is malonyl-[ACP] + acetyl-CoA + H(+) = 3-oxobutanoyl-[ACP] + CO2 + CoA. It participates in lipid metabolism; fatty acid biosynthesis. Its function is as follows. Catalyzes the condensation reaction of fatty acid synthesis by the addition to an acyl acceptor of two carbons from malonyl-ACP. Catalyzes the first condensation reaction which initiates fatty acid synthesis and may therefore play a role in governing the total rate of fatty acid production. Possesses both acetoacetyl-ACP synthase and acetyl transacylase activities. Its substrate specificity determines the biosynthesis of branched-chain and/or straight-chain of fatty acids. This is Beta-ketoacyl-[acyl-carrier-protein] synthase III from Cupriavidus necator (strain ATCC 17699 / DSM 428 / KCTC 22496 / NCIMB 10442 / H16 / Stanier 337) (Ralstonia eutropha).